Consider the following 322-residue polypeptide: uncharacterized protein (322 aa).

The next 8 membrane-spanning stretches (helical) occupy residues Ile-7 to Ile-27, Ala-54 to Phe-74, Phe-87 to Ser-107, Ile-128 to Val-148, Phe-162 to Ile-182, Ile-209 to Gly-229, Gly-249 to Leu-269, and Val-287 to Leu-307.

To E.coli YbhN.

The protein localises to the cell membrane. This is an uncharacterized protein from Synechocystis sp. (strain ATCC 27184 / PCC 6803 / Kazusa).